The chain runs to 178 residues: Large ribosomal subunit protein uL6 (178 aa).

The protein belongs to the universal ribosomal protein uL6 family. As to quaternary structure, part of the 50S ribosomal subunit.

This protein binds to the 23S rRNA, and is important in its secondary structure. It is located near the subunit interface in the base of the L7/L12 stalk, and near the tRNA binding site of the peptidyltransferase center. The polypeptide is Large ribosomal subunit protein uL6 (Streptococcus agalactiae serotype Ia (strain ATCC 27591 / A909 / CDC SS700)).